Consider the following 465-residue polypeptide: Polyadenylation factor subunit 2 (465 aa).

Positions 1–20 (MDGHNQNQYQNQNQIQQSQQ) are enriched in low complexity. The tract at residues 1 to 26 (MDGHNQNQYQNQNQIQQSQQPPLKKY) is disordered. WD repeat units lie at residues 133-163 (AHDS…KIWQ), 175-205 (AHTE…KIWN), 217-247 (GHHW…KLWD), 259-290 (KFKH…RVFD), and 348-378 (AHDK…RFWT). The disordered stretch occupies residues 417–465 (EFGAAPPPPATLEPHALPNMNGFINKKPRQEIPGIDSNIKSSTLPGLSI). Polar residues predominate over residues 454–465 (NIKSSTLPGLSI).

Component of the cleavage and polyadenylation factor (CPF) complex, which is composed of at least PTI1, SYC1, SSU72, GLC7, MPE1, REF2, PFS2, PTA1, YSH1/BRR5, SWD2, CFT2/YDH1, YTH1, CFT1/YHH1, FIP1 and PAP1. Interacts with YSH1/BRR5, FIP1 and RNA14.

The protein localises to the nucleus. Integral and essential component of the cleavage and polyadenylation factor (CPF) complex, which plays a key role in polyadenylation-dependent pre-mRNA 3'-end formation and cooperates with cleavage factors including the CFIA complex and NAB4/CFIB. May bridge the CPF and CFIA complexes. This chain is Polyadenylation factor subunit 2 (PFS2), found in Saccharomyces cerevisiae (strain ATCC 204508 / S288c) (Baker's yeast).